We begin with the raw amino-acid sequence, 602 residues long: Multicopper oxidase aurL2 (602 aa).

A signal peptide spans 1–17 (MLFRFLALLPFVAGAFA). 2 Plastocyanin-like domains span residues 38-149 (DIKI…VRDA) and 160-317 (IPLL…KYRC). 2 N-linked (GlcNAc...) asparagine glycosylation sites follow: Asn-52 and Asn-80. Positions 84, 86, 130, and 132 each coordinate Cu cation. Residues Asn-201, Asn-247, Asn-337, Asn-383, Asn-387, Asn-419, and Asn-424 are each glycosylated (N-linked (GlcNAc...) asparagine). One can recognise a Plastocyanin-like 3 domain in the interval 421–556 (TTPNYTLALE…QVMGMATVWV (136 aa)). A Cu cation-binding site is contributed by His-469. 2 N-linked (GlcNAc...) asparagine glycosylation sites follow: Asn-482 and Asn-486.

Belongs to the multicopper oxidase family.

It participates in pigment biosynthesis. In terms of biological role, multicopper oxidase; part of the gene cluster that mediates the biosynthesis of aurofusarin, a red mycelium pigment which is acting as a mycotoxin. The first step is performed by the polyketide synthase which condenses one acetyl-CoA and 6 malonyl-CoA units to form the first intermediate, the cyclic heptaketide and yellow pigment YWA1. The C2 hydroxyl group in the pyrone ring of YWA1 is probably formed during ring closure by an aldol-type cyclization reaction. The dehydratase aurZ then acts as the first tailoring enzyme in the aurofusarin biosynthetic pathway by converting YWA1 to nor-rubrofusarin. Nor-rubrofusarin is then methylated to rubrofusarin by the O-methyltransferase aurJ. Rubrofusarin is then transported across the plasma membrane by the rubrofusarin-specific pump aurT for further enzymatic processing by the extracellular complex composed of GIP1, aurF, aurO and aurS to yield aurofusarin. This chain is Multicopper oxidase aurL2 (aurL2), found in Gibberella zeae (strain ATCC MYA-4620 / CBS 123657 / FGSC 9075 / NRRL 31084 / PH-1) (Wheat head blight fungus).